The primary structure comprises 294 residues: uncharacterized protein (294 aa).

Residues 13 to 151 enclose the Tyrosine-protein phosphatase domain; the sequence is QCSQIRPYLY…LIDLEQKLRG (139 aa). The active-site Phosphocysteine intermediate is the Cys95. Residues 234–294 are disordered; that stretch reads PTLLVPSSSS…WRLSFHKDVV (61 aa).

Belongs to the protein-tyrosine phosphatase family. Non-receptor class dual specificity subfamily.

This is an uncharacterized protein from Caenorhabditis elegans.